The sequence spans 314 residues: Protein SPOROCYTELESS (314 aa).

The span at 1-17 shows a compositional bias: polar residues; the sequence is MATSLFFMSTDQNSVGN. Disordered regions lie at residues 1-20 and 33-62; these read MATS…NPND and GEIR…PTLR. An SPL motif is present at residues 62–70; that stretch reads RGMGVAKLE. Positions 308–314 match the EAR motif; sequence IDLSLKL.

The protein belongs to the NOZZLE family. As to quaternary structure, homodimer and heterodimer with SPEARs. Interacts in vitro with YAB1, YAB3 and YAB4. Interacts (via EAR motif) with TPL, TPR1, TPR2, TPR3 and TPR4. Interacts with SPEAR1, SPEAR2, SPEAR3, SPEAR4, TCP1, TCP6, TCP8, TCP9, TCP11, TCP15, TCP20, TCP21 and TCP23. Interacts with TCP2, TCP3, TCP4, TCP5, TCP10, TCP13, TCP17 and TCP24. Expressed in flower buds. Not found in leaves, siliques and stems. Detected in rosette leaves, stem tissue and seedlings.

It is found in the nucleus. Transcriptional regulator of sporocyte development. Acts as an adapter-like transcriptional repressor recruiting TPL/TPR corepressors to inhibit TCP transcription factors. Required for nucellus and embryo sac development. Plays a central role in patterning both the proximal-distal and the adaxial-abaxial axes during ovule development. Involved in establishing the prospective chalaza of the ovule and in controlling the cell number and the length of the funiculus, and is required for the development of the integuments. Required, with BEL1, for cytokinin-induced PIN1 expression in ovules. Involved in controlling stamen identity. May also regulate the morphology of lateral organs by repressing auxin production. The chain is Protein SPOROCYTELESS from Arabidopsis thaliana (Mouse-ear cress).